A 332-amino-acid polypeptide reads, in one-letter code: Ketol-acid reductoisomerase (NAD(+)) (332 aa).

The region spanning 1–186 (MEILHDEDVD…HWTKAGILEC (186 aa)) is the KARI N-terminal Rossmann domain. NAD(+) is bound by residues 24–27 (YGAQ), Glu-46, Asn-55, Ser-57, and 87–90 (DEVQ). Residue His-112 is part of the active site. Gly-138 serves as a coordination point for NAD(+). Positions 187–332 (TFEQETYEDL…AEIRKLFAQK (146 aa)) constitute a KARI C-terminal knotted domain. Mg(2+) is bound by residues Asp-195, Glu-199, Glu-231, and Glu-235. Ser-256 contributes to the substrate binding site.

The protein belongs to the ketol-acid reductoisomerase family. As to quaternary structure, homodimer. Mg(2+) is required as a cofactor.

It catalyses the reaction (2R)-2,3-dihydroxy-3-methylbutanoate + NAD(+) = (2S)-2-acetolactate + NADH + H(+). It functions in the pathway amino-acid biosynthesis; L-isoleucine biosynthesis; L-isoleucine from 2-oxobutanoate: step 2/4. Its pathway is amino-acid biosynthesis; L-valine biosynthesis; L-valine from pyruvate: step 2/4. In terms of biological role, involved in the biosynthesis of branched-chain amino acids (BCAA). Catalyzes an alkyl-migration followed by a ketol-acid reduction of (S)-2-acetolactate (S2AL) to yield (R)-2,3-dihydroxy-isovalerate. In the isomerase reaction, S2AL is rearranged via a Mg-dependent methyl migration to produce 3-hydroxy-3-methyl-2-ketobutyrate (HMKB). In the reductase reaction, this 2-ketoacid undergoes a metal-dependent reduction by NADH to yield (R)-2,3-dihydroxy-isovalerate. In Uncultured archaeon GZfos26G2, this protein is Ketol-acid reductoisomerase (NAD(+)).